A 313-amino-acid polypeptide reads, in one-letter code: Methionyl-tRNA formyltransferase (313 aa).

Residue 113-116 coordinates (6S)-5,6,7,8-tetrahydrofolate; the sequence is SLLP.

It belongs to the Fmt family.

It carries out the reaction L-methionyl-tRNA(fMet) + (6R)-10-formyltetrahydrofolate = N-formyl-L-methionyl-tRNA(fMet) + (6S)-5,6,7,8-tetrahydrofolate + H(+). Functionally, attaches a formyl group to the free amino group of methionyl-tRNA(fMet). The formyl group appears to play a dual role in the initiator identity of N-formylmethionyl-tRNA by promoting its recognition by IF2 and preventing the misappropriation of this tRNA by the elongation apparatus. The protein is Methionyl-tRNA formyltransferase of Francisella tularensis subsp. tularensis (strain FSC 198).